A 147-amino-acid polypeptide reads, in one-letter code: D-aminoacyl-tRNA deacylase (147 aa).

Residues 136–137 carry the Gly-cisPro motif, important for rejection of L-amino acids motif; the sequence is GP.

It belongs to the DTD family. Homodimer.

Its subcellular location is the cytoplasm. The enzyme catalyses glycyl-tRNA(Ala) + H2O = tRNA(Ala) + glycine + H(+). It carries out the reaction a D-aminoacyl-tRNA + H2O = a tRNA + a D-alpha-amino acid + H(+). Functionally, an aminoacyl-tRNA editing enzyme that deacylates mischarged D-aminoacyl-tRNAs. Also deacylates mischarged glycyl-tRNA(Ala), protecting cells against glycine mischarging by AlaRS. Acts via tRNA-based rather than protein-based catalysis; rejects L-amino acids rather than detecting D-amino acids in the active site. By recycling D-aminoacyl-tRNA to D-amino acids and free tRNA molecules, this enzyme counteracts the toxicity associated with the formation of D-aminoacyl-tRNA entities in vivo and helps enforce protein L-homochirality. This Streptococcus pyogenes serotype M6 (strain ATCC BAA-946 / MGAS10394) protein is D-aminoacyl-tRNA deacylase.